We begin with the raw amino-acid sequence, 241 residues long: uncharacterized protein (241 aa).

The protein belongs to the AB hydrolase superfamily. AB hydrolase 2 family.

This is an uncharacterized protein from Schizosaccharomyces pombe (strain 972 / ATCC 24843) (Fission yeast).